The sequence spans 357 residues: Cell division control protein 10 (357 aa).

One can recognise a Septin-type G domain in the interval 34-306 (RGFQFNIMVV…ETFRSKQLIA (273 aa)). A G1 motif region spans residues 44–51 (GRSGLGKS). GTP is bound by residues 44–51 (GRSGLGKS), Thr-78, Gly-104, 184–192 (KSDSLTLDE), Gly-240, and Arg-255. The tract at residues 101-104 (DTPG) is G3 motif. The segment at 183–186 (AKSD) is G4 motif. The tract at residues 310–357 (NASNPNRQSQLQKDQGQTSQQSNQDLKNTSGVPNAPMFQSTTGTAAAR) is disordered.

It belongs to the TRAFAC class TrmE-Era-EngA-EngB-Septin-like GTPase superfamily. Septin GTPase family.

The protein resides in the bud neck. In terms of biological role, plays a role in the cell cycle. Involved in the formation of the ring of filaments in the neck region at the mother-bud junction during mitosis. The polypeptide is Cell division control protein 10 (CDC10) (Candida albicans (strain SC5314 / ATCC MYA-2876) (Yeast)).